A 418-amino-acid chain; its full sequence is D-amino acid dehydrogenase (418 aa).

V3–W17 is an FAD binding site.

The protein belongs to the DadA oxidoreductase family. Requires FAD as cofactor.

It catalyses the reaction a D-alpha-amino acid + A + H2O = a 2-oxocarboxylate + AH2 + NH4(+). Functionally, oxidative deamination of D-amino acids. The chain is D-amino acid dehydrogenase from Neisseria meningitidis serogroup A / serotype 4A (strain DSM 15465 / Z2491).